The sequence spans 358 residues: MAVKSLSNSILTPLQKKNRKQIQVWLYSILLLCLAIVLVGGATRLTGSGLSITEWKPIHGVIPPIGVEQWQEEFLKYQQIAQYKMLNRDMTLSAFKVIFWWEWAHRVLGRLVGLVALLGLIWFWAIKHIEKNVLLQLIIVPILIAFQGVVGWWMVASGIGQSNLTSVSQYRLAFHLITACFVIIFVTYLSQGLAEYSEKPASHRVQYFAGWLVVLILIEVYFGALVAGLHAGKVYNTWPLMDGQFIPDGLLQHDPIWLNLFENPLTVQFVHRFFAYILFFVAIIHAFYVQKNIPHSIHARRAFFICVMIAVQALLGIITLLQEVPISLGLIHQSVALAILCFSVAHWRATKGAYRAIE.

Helical transmembrane passes span 22-42, 107-127, 133-153, 172-192, 208-228, 269-289, 302-322, and 324-344; these read IQVW…VGGA, VLGR…WAIK, VLLQ…VGWW, LAFH…LSQG, FAGW…LVAG, FVHR…AFYV, AFFI…TLLQ, and VPIS…CFSV. Position 271 (His271) interacts with heme. Residue His332 participates in heme binding.

The protein belongs to the COX15/CtaA family. Type 2 subfamily. As to quaternary structure, interacts with CtaB. It depends on heme b as a cofactor.

The protein resides in the cell membrane. The catalysed reaction is Fe(II)-heme o + 2 A + H2O = Fe(II)-heme a + 2 AH2. It functions in the pathway porphyrin-containing compound metabolism; heme A biosynthesis; heme A from heme O: step 1/1. Its function is as follows. Catalyzes the conversion of heme O to heme A by two successive hydroxylations of the methyl group at C8. The first hydroxylation forms heme I, the second hydroxylation results in an unstable dihydroxymethyl group, which spontaneously dehydrates, resulting in the formyl group of heme A. This Bartonella henselae (strain ATCC 49882 / DSM 28221 / CCUG 30454 / Houston 1) (Rochalimaea henselae) protein is Heme A synthase.